Here is an 813-residue protein sequence, read N- to C-terminus: Calpain-7 (813 aa).

Methionine 1 is modified (N-acetylmethionine). Threonine 95 carries the post-translational modification Phosphothreonine. One can recognise a Calpain catalytic domain in the interval 232–540; sequence RERFAYPMPF…YDVVYLSWNP (309 aa). Residues cysteine 290, histidine 458, and asparagine 478 contribute to the active site. The tract at residues 541–701 is domain III; sequence ALFKESTCIH…INGKWSGQSA (161 aa). The tract at residues 702-813 is domain N; that stretch reads GGCGNFQETH…TVPIKTTQLQ (112 aa).

It belongs to the peptidase C2 family. As to expression, ubiquitous.

The protein resides in the nucleus. Calcium-regulated non-lysosomal thiol-protease. This is Calpain-7 (Capn7) from Mus musculus (Mouse).